Here is a 681-residue protein sequence, read N- to C-terminus: Proton channel OTOP3 (681 aa).

Residues 1–25 (MLSKEEPACRQFHSREKTWGNEHNG) show a composition bias toward basic and acidic residues. The disordered stretch occupies residues 1-26 (MLSKEEPACRQFHSREKTWGNEHNGK). The Cytoplasmic segment spans residues 1-112 (MLSKEEPACR…LHQRAKKTGR (112 aa)). A helical membrane pass occupies residues 113–133 (LFSGLFGLNLMFLGGTVVSSV). At 134-143 (ALSNKAVPER) the chain is on the extracellular side. The helical transmembrane segment at 144–166 (DSQSFLCILMLLSSVWALYHLLF) threads the bilayer. Residues 167-182 (IRNQNGAVHHDHHAGA) are Cytoplasmic-facing. The helical transmembrane segment at 183-204 (MWLKASLAIFGVCSIILSIFEI) threads the bilayer. Residues 205 to 216 (GHALLLQNCEIL) are Extracellular-facing. The chain crosses the membrane as a helical span at residues 217–240 (MDIVFFSIEIVFVSVQTVLLWVSC). Topologically, residues 241-248 (KDCVQMHH) are cytoplasmic. Residues 249–271 (SVTRYGIMLTLATDILLWLTAVI) traverse the membrane as a helical segment. The Extracellular portion of the chain corresponds to 272–317 (DDSLEQDLEILQSNSTQDESNEMAQCQCPTDSMCWGLKQGYVTMFP). The chain crosses the membrane as a helical span at residues 318–334 (FNIEYSLICATLLFIMW). Topologically, residues 335–358 (KNVGRREKLHSDPPRHTFQLRGII) are cytoplasmic. The helical transmembrane segment at 359-378 (YGPLIGGAALLVGISVFVQY) threads the bilayer. Residues 379–392 (QVEATSGMVSILSY) lie on the Extracellular side of the membrane. The chain crosses the membrane as a helical span at residues 393-415 (HMYYGYKMIILAPMIVCSVAGII). The Cytoplasmic portion of the chain corresponds to 416-507 (AHSLREKEKK…QGKMKNYTRK (92 aa)). A helical transmembrane segment spans residues 508–529 (LDVTLLFVSAVGQLGISYFSII). Topologically, residues 530–540 (ATVVTTPWTML) are extracellular. Residues 541–563 (SALNFSNSLLLILQYLSQTMFII) form a helical membrane-spanning segment. Residues 564–614 (ESMRSIHEEEKEKPGHHEESHRRMSVQEMHKAPPSCLDAGHLGLSRRVVKE) are Cytoplasmic-facing. The chain crosses the membrane as a helical span at residues 615 to 632 (MAMFLMICNIMCWILGAF). The Extracellular segment spans residues 633–651 (GAHPLYMNGLERQLYGSGI). Residues 652–674 (WLAILNIGLPLSVFYRMHSVGIL) form a helical membrane-spanning segment. Residues 675 to 681 (LEVYLHA) are Cytoplasmic-facing.

The protein belongs to the otopetrin family. As to quaternary structure, homodimer.

The protein resides in the cell membrane. It catalyses the reaction H(+)(in) = H(+)(out). With respect to regulation, pH regulates the proton channel activity from both sides of the plasma membrane. Low pH activates the channel from the extracellular side but inactivates the channel on the intracellular side. Zn(2+) and Ca(2+) can partially block the channel. Proton-selective channel gated by extracellular protons. The protein is Proton channel OTOP3 (otop3) of Xenopus tropicalis (Western clawed frog).